The sequence spans 510 residues: Bifunctional purine biosynthesis protein PurH (510 aa).

One can recognise an MGS-like domain in the interval 1 to 145; that stretch reads MSKRALISVS…KNFEDVLVVT (145 aa).

Belongs to the PurH family.

It carries out the reaction (6R)-10-formyltetrahydrofolate + 5-amino-1-(5-phospho-beta-D-ribosyl)imidazole-4-carboxamide = 5-formamido-1-(5-phospho-D-ribosyl)imidazole-4-carboxamide + (6S)-5,6,7,8-tetrahydrofolate. The enzyme catalyses IMP + H2O = 5-formamido-1-(5-phospho-D-ribosyl)imidazole-4-carboxamide. It functions in the pathway purine metabolism; IMP biosynthesis via de novo pathway; 5-formamido-1-(5-phospho-D-ribosyl)imidazole-4-carboxamide from 5-amino-1-(5-phospho-D-ribosyl)imidazole-4-carboxamide (10-formyl THF route): step 1/1. It participates in purine metabolism; IMP biosynthesis via de novo pathway; IMP from 5-formamido-1-(5-phospho-D-ribosyl)imidazole-4-carboxamide: step 1/1. This Oceanobacillus iheyensis (strain DSM 14371 / CIP 107618 / JCM 11309 / KCTC 3954 / HTE831) protein is Bifunctional purine biosynthesis protein PurH.